A 276-amino-acid chain; its full sequence is Large ribosomal subunit protein uL2 (276 aa).

The disordered stretch occupies residues 219–276 (TVRGSAMNPNDHPHGGGEGRSPIGRPSPVTPWGKPALGYKTRKKNKHSDKFIVTGRKR).

It belongs to the universal ribosomal protein uL2 family. Part of the 50S ribosomal subunit. Forms a bridge to the 30S subunit in the 70S ribosome.

Functionally, one of the primary rRNA binding proteins. Required for association of the 30S and 50S subunits to form the 70S ribosome, for tRNA binding and peptide bond formation. It has been suggested to have peptidyltransferase activity; this is somewhat controversial. Makes several contacts with the 16S rRNA in the 70S ribosome. In Alkaliphilus metalliredigens (strain QYMF), this protein is Large ribosomal subunit protein uL2.